Reading from the N-terminus, the 211-residue chain is tRNA (guanine-N(7)-)-methyltransferase (211 aa).

S-adenosyl-L-methionine-binding residues include E44, D69, D96, and D118. The active site involves D118. K122 provides a ligand contact to substrate. The tract at residues 124 to 129 (RHEKRR) is interaction with RNA. Substrate is bound by residues D154 and 191 to 194 (TEYE).

Belongs to the class I-like SAM-binding methyltransferase superfamily. TrmB family.

It catalyses the reaction guanosine(46) in tRNA + S-adenosyl-L-methionine = N(7)-methylguanosine(46) in tRNA + S-adenosyl-L-homocysteine. The protein operates within tRNA modification; N(7)-methylguanine-tRNA biosynthesis. In terms of biological role, catalyzes the formation of N(7)-methylguanine at position 46 (m7G46) in tRNA. The chain is tRNA (guanine-N(7)-)-methyltransferase from Streptococcus equi subsp. equi (strain 4047).